The chain runs to 616 residues: Dihydroxy-acid dehydratase (616 aa).

Mg(2+) is bound at residue Asp-81. Cys-122 serves as a coordination point for [2Fe-2S] cluster. The Mg(2+) site is built by Asp-123 and Lys-124. N6-carboxylysine is present on Lys-124. Cys-195 contributes to the [2Fe-2S] cluster binding site. Glu-491 is a binding site for Mg(2+). Ser-517 acts as the Proton acceptor in catalysis.

This sequence belongs to the IlvD/Edd family. Homodimer. The cofactor is [2Fe-2S] cluster. It depends on Mg(2+) as a cofactor.

The catalysed reaction is (2R)-2,3-dihydroxy-3-methylbutanoate = 3-methyl-2-oxobutanoate + H2O. It catalyses the reaction (2R,3R)-2,3-dihydroxy-3-methylpentanoate = (S)-3-methyl-2-oxopentanoate + H2O. The protein operates within amino-acid biosynthesis; L-isoleucine biosynthesis; L-isoleucine from 2-oxobutanoate: step 3/4. Its pathway is amino-acid biosynthesis; L-valine biosynthesis; L-valine from pyruvate: step 3/4. Its function is as follows. Functions in the biosynthesis of branched-chain amino acids. Catalyzes the dehydration of (2R,3R)-2,3-dihydroxy-3-methylpentanoate (2,3-dihydroxy-3-methylvalerate) into 2-oxo-3-methylpentanoate (2-oxo-3-methylvalerate) and of (2R)-2,3-dihydroxy-3-methylbutanoate (2,3-dihydroxyisovalerate) into 2-oxo-3-methylbutanoate (2-oxoisovalerate), the penultimate precursor to L-isoleucine and L-valine, respectively. This is Dihydroxy-acid dehydratase from Shigella sonnei (strain Ss046).